The following is a 336-amino-acid chain: Glyceraldehyde-3-phosphate dehydrogenase (336 aa).

NAD(+)-binding positions include 12–13 (RI), Asp34, Arg78, and Thr121. D-glyceraldehyde 3-phosphate is bound by residues 151-153 (SCT), Thr182, Arg199, 212-213 (TG), and Arg235. The Nucleophile role is filled by Cys152. Asn316 contacts NAD(+).

Belongs to the glyceraldehyde-3-phosphate dehydrogenase family. As to quaternary structure, homotetramer.

The protein resides in the cytoplasm. The catalysed reaction is D-glyceraldehyde 3-phosphate + phosphate + NAD(+) = (2R)-3-phospho-glyceroyl phosphate + NADH + H(+). Its pathway is carbohydrate degradation; glycolysis; pyruvate from D-glyceraldehyde 3-phosphate: step 1/5. Also binds human plasminogen. Its function is as follows. Catalyzes the oxidative phosphorylation of glyceraldehyde 3-phosphate (G3P) to 1,3-bisphosphoglycerate (BPG) using the cofactor NAD. The first reaction step involves the formation of a hemiacetal intermediate between G3P and a cysteine residue, and this hemiacetal intermediate is then oxidized to a thioester, with concomitant reduction of NAD to NADH. The reduced NADH is then exchanged with the second NAD, and the thioester is attacked by a nucleophilic inorganic phosphate to produce BPG. The sequence is that of Glyceraldehyde-3-phosphate dehydrogenase (gap) from Streptococcus pyogenes.